Consider the following 271-residue polypeptide: Virulence regulon transcriptional activator VirF (271 aa).

One can recognise an HTH araC/xylS-type domain in the interval 167–265 (ERLQKFMEEN…GCTPSQARLT (99 aa)). DNA-binding regions (H-T-H motif) lie at residues 184–205 (SKFA…GTVY) and 232–255 (IVDI…RRRF).

In terms of biological role, transcriptional activator of the Yersinia virulence regulon. The protein is Virulence regulon transcriptional activator VirF (virF) of Yersinia enterocolitica serotype O:8 / biotype 1B (strain NCTC 13174 / 8081).